Reading from the N-terminus, the 233-residue chain is MYQRVLVKLSGEVMCGEGSRGFDQSNINYLVQQIAQIVDYGVNVGIVIGAGNIFRGEELSEIPHSLADQIGMLGTVINALYLKGSLQKVGIKCVVVSQVTSLPSIRPIHYDDINLYFDAGYVVIFAGGTSNPFFTTDTAAALRAVEMGANLLIKATKVDGIYDSDPKKNKSARKLDKISYYDAISRGLKVMDMEAFSICGRYKLPIVILNFFEDGSLLRAVRGEDVGSIIMPD.

Residues 8 to 11 (KLSG), glycine 51, and arginine 55 each bind ATP. Residues aspartate 68 and 129–136 (TSNPFFTT) each bind UMP. Residues threonine 156, tyrosine 162, and aspartate 165 each coordinate ATP.

The protein belongs to the UMP kinase family. Homohexamer.

It localises to the cytoplasm. It catalyses the reaction UMP + ATP = UDP + ADP. Its pathway is pyrimidine metabolism; CTP biosynthesis via de novo pathway; UDP from UMP (UMPK route): step 1/1. Its activity is regulated as follows. Inhibited by UTP. Its function is as follows. Catalyzes the reversible phosphorylation of UMP to UDP. The sequence is that of Uridylate kinase from Pseudothermotoga lettingae (strain ATCC BAA-301 / DSM 14385 / NBRC 107922 / TMO) (Thermotoga lettingae).